Reading from the N-terminus, the 241-residue chain is Chalcone--flavanone isomerase C (241 aa).

3 residues coordinate substrate: T50, N115, and S192.

It belongs to the chalcone isomerase family.

It carries out the reaction a chalcone = a flavanone.. It participates in secondary metabolite biosynthesis; flavonoid biosynthesis. Catalyzes the intramolecular cyclization of bicyclic chalcones into tricyclic (S)-flavanones. Responsible for the isomerization of 4,2',4',6'-tetrahydroxychalcone (also termed chalcone) into naringenin. The chain is Chalcone--flavanone isomerase C (CHI3) from Petunia hybrida (Petunia).